A 565-amino-acid polypeptide reads, in one-letter code: Adenine deaminase (565 aa).

This sequence belongs to the metallo-dependent hydrolases superfamily. Adenine deaminase family. Mn(2+) is required as a cofactor.

It carries out the reaction adenine + H2O + H(+) = hypoxanthine + NH4(+). In Gluconobacter oxydans (strain 621H) (Gluconobacter suboxydans), this protein is Adenine deaminase.